A 492-amino-acid polypeptide reads, in one-letter code: Citrate synthase, peroxisomal (492 aa).

Residues histidine 307, histidine 346, and aspartate 402 contribute to the active site. Positions 469-492 (PAKVRSQDSYSSATTKRYSKVTSH) are disordered. Residues 475–484 (QDSYSSATTK) show a composition bias toward polar residues.

The protein belongs to the citrate synthase family.

It is found in the peroxisome. The enzyme catalyses oxaloacetate + acetyl-CoA + H2O = citrate + CoA + H(+). The protein operates within carbohydrate metabolism; tricarboxylic acid cycle; isocitrate from oxaloacetate: step 1/2. Its function is as follows. Peroxisomal protein involved in the cellular biosynthesis of citrate, and required primarily for cell growth and modulation of multicellular development. This chain is Citrate synthase, peroxisomal (cshA), found in Dictyostelium discoideum (Social amoeba).